The primary structure comprises 129 residues: Glycine cleavage system H protein (129 aa).

In terms of domain architecture, Lipoyl-binding spans 24–106 (TYTVGITEHA…YAGGWIFKIK (83 aa)). An N6-lipoyllysine modification is found at lysine 65.

This sequence belongs to the GcvH family. In terms of assembly, the glycine cleavage system is composed of four proteins: P, T, L and H. It depends on (R)-lipoate as a cofactor.

Its function is as follows. The glycine cleavage system catalyzes the degradation of glycine. The H protein shuttles the methylamine group of glycine from the P protein to the T protein. The sequence is that of Glycine cleavage system H protein from Escherichia fergusonii (strain ATCC 35469 / DSM 13698 / CCUG 18766 / IAM 14443 / JCM 21226 / LMG 7866 / NBRC 102419 / NCTC 12128 / CDC 0568-73).